A 47-amino-acid polypeptide reads, in one-letter code: Conotoxin reg3.11 (47 aa).

The propeptide occupies 1–31; that stretch reads DQPVERHAENKRHLIPAVMRAMTMNADRRVQ. Intrachain disulfides connect C32/C44, C33/C42, and C38/C45. Residues 46-47 constitute a propeptide that is removed on maturation; it reads YH.

This sequence belongs to the conotoxin M superfamily. In terms of tissue distribution, expressed by the venom duct.

It is found in the secreted. This is Conotoxin reg3.11 from Conus regius (Crown cone).